Reading from the N-terminus, the 167-residue chain is S-ribosylhomocysteine lyase (167 aa).

Residues H54, H58, and C128 each contribute to the Fe cation site.

It belongs to the LuxS family. Homodimer. Fe cation serves as cofactor.

It carries out the reaction S-(5-deoxy-D-ribos-5-yl)-L-homocysteine = (S)-4,5-dihydroxypentane-2,3-dione + L-homocysteine. Involved in the synthesis of autoinducer 2 (AI-2) which is secreted by bacteria and is used to communicate both the cell density and the metabolic potential of the environment. The regulation of gene expression in response to changes in cell density is called quorum sensing. Catalyzes the transformation of S-ribosylhomocysteine (RHC) to homocysteine (HC) and 4,5-dihydroxy-2,3-pentadione (DPD). The sequence is that of S-ribosylhomocysteine lyase from Haemophilus influenzae (strain PittEE).